We begin with the raw amino-acid sequence, 182 residues long: Large ribosomal subunit protein uL16 (182 aa).

Residues Glu140–Ser182 are disordered. The span at Thr162–Ser176 shows a compositional bias: low complexity.

Belongs to the universal ribosomal protein uL16 family. As to quaternary structure, part of the 50S ribosomal subunit.

In terms of biological role, binds 23S rRNA and is also seen to make contacts with the A and possibly P site tRNAs. The polypeptide is Large ribosomal subunit protein uL16 (Prochlorococcus marinus (strain SARG / CCMP1375 / SS120)).